The sequence spans 317 residues: Melanocyte-stimulating hormone receptor (317 aa).

The Extracellular segment spans residues 1–37 (MPVQGSQRRLLGSLNSTPTATPRLGLAANQTGARCLE). An N-linked (GlcNAc...) asparagine glycan is attached at asparagine 29. A helical membrane pass occupies residues 38-63 (VSIPDGLFLSLGLVSLVENVLVVVAI). Over 64 to 72 (ARNRNLHSP) the chain is Cytoplasmic. A helical membrane pass occupies residues 73–93 (MYCFICCLALSDLLVSGSNML). Residues 94–118 (ETAVILLLEAGALAARAAVVQQLDN) lie on the Extracellular side of the membrane. The helical transmembrane segment at 119-140 (VIDVITCSSMLSSLCFLGAIAV) threads the bilayer. Over 141–163 (DRYISIFYALRYHSIVTLRRARR) the chain is Cytoplasmic. Residues 164 to 183 (VVAAIWVASVLFSTLFIAYC) form a helical membrane-spanning segment. The Extracellular segment spans residues 184–191 (DHAAVLLS). The helical transmembrane segment at 192–211 (LVVFFLAMLVLMAVLYVHML) threads the bilayer. Topologically, residues 212 to 240 (ARACQHAQGIAQLHKRQRPAHQGVGLKGA) are cytoplasmic. Residues 241-266 (ATLTILLGIFFLCWGPFFLHLTLIVL) form a helical membrane-spanning segment. Topologically, residues 267-279 (CPQHPTCSCIFKN) are extracellular. Residues 280-300 (FNLFLTLIICNAIIDPLIYAF) traverse the membrane as a helical segment. Residues 301–317 (RSQELRRTLKKVLLCSW) lie on the Cytoplasmic side of the membrane. Cysteine 315 is lipidated: S-palmitoyl cysteine.

The protein belongs to the G-protein coupled receptor 1 family. Interacts with MGRN1, but does not undergo MGRN1-mediated ubiquitination; this interaction competes with GNAS-binding and thus inhibits agonist-induced cAMP production. Interacts with OPN3; the interaction results in a decrease in MC1R-mediated cAMP signaling and ultimately a decrease in melanin production in melanocytes.

It localises to the cell membrane. Its function is as follows. Receptor for MSH (alpha, beta and gamma) and ACTH. The activity of this receptor is mediated by G proteins which activate adenylate cyclase. Mediates melanogenesis, the production of eumelanin (black/brown) and phaeomelanin (red/yellow), via regulation of cAMP signaling in melanocytes. This chain is Melanocyte-stimulating hormone receptor (MC1R), found in Trachypithecus auratus (Javan langur).